A 567-amino-acid chain; its full sequence is Cytochrome P450 monooxygenase 79 (567 aa).

Residues 7-24 (ELAILAIVLLVTAVVFYT) form a helical membrane-spanning segment. Asn223 and Asn279 each carry an N-linked (GlcNAc...) asparagine glycan. Residue Cys475 participates in heme binding.

This sequence belongs to the cytochrome P450 family. Heme serves as cofactor.

It localises to the membrane. The protein operates within secondary metabolite biosynthesis. Cytochrome P450 monooxygenase that is able to use dehydroabietic acid as a substrate for oxidation. The protein is Cytochrome P450 monooxygenase 79 of Postia placenta (strain ATCC 44394 / Madison 698-R) (Brown rot fungus).